Reading from the N-terminus, the 478-residue chain is Dynein regulatory complex subunit 4 (478 aa).

Over residues 1-12 the composition is skewed to basic residues; it reads MAPKKKGKKGKA. The tract at residues 1-33 is disordered; sequence MAPKKKGKKGKAKGTPIVDGLAPEDMSKEQVEE. The interval 1–114 is regulates microtubule-binding; sequence MAPKKKGKKG…LLYEHQNNLT (114 aa). The interval 115–258 is microtubule-binding; the sequence is EMKAEGTVVM…NSLKEQMEDM (144 aa). The stretch at 242 to 427 forms a coiled coil; it reads LNNLALINSL…KDLQYELAQV (186 aa). The tract at residues 357–478 is interaction with SMO; that stretch reads QQKTGFKNLV…GPAGLVGTPT (122 aa).

It belongs to the DRC4 family. As to quaternary structure, component of the nexin-dynein regulatory complex (N-DRC). Interacts with microtubules. Interacts with SMO. Interacts (via coiled-coil domains) with RAB3B (in GTP-bound form). Interacts with DRC1. Interacts with DRC7. In terms of tissue distribution, expressed in respiratory epithelial cells (at protein level). Expressed in the heart, skeletal muscle, pancreas, liver, brain, trachea and lung. Weakly or not expressed in placenta and kidney.

The protein resides in the cytoplasm. The protein localises to the cytoskeleton. Its subcellular location is the cell projection. It is found in the cilium. It localises to the flagellum. The protein resides in the cilium axoneme. The protein localises to the cilium basal body. Its subcellular location is the golgi apparatus. It is found in the flagellum axoneme. Functionally, component of the nexin-dynein regulatory complex (N-DRC), a key regulator of ciliary/flagellar motility which maintains the alignment and integrity of the distal axoneme and regulates microtubule sliding in motile axonemes. Plays an important role in the assembly of the N-DRC linker. Plays dual roles at both the primary (or non-motile) cilia to regulate hedgehog signaling and in motile cilia to coordinate cilia movement. Required for proper motile cilia functioning. Positively regulates ciliary smoothened (SMO)-dependent Hedgehog (Hh) signaling pathway by facilitating the trafficking of SMO into the cilium and the stimulation of SMO activity in a GRK2-dependent manner. This is Dynein regulatory complex subunit 4 (GAS8) from Homo sapiens (Human).